The primary structure comprises 507 residues: Dihydrolipoyllysine-residue acetyltransferase component of pyruvate dehydrogenase complex, mitochondrial (507 aa).

Positions 77-153 (HNRVALPALS…PIGKLLCIIV (77 aa)) constitute a Lipoyl-binding domain. N6-lipoyllysine is present on Lys-118. Disordered regions lie at residues 168–223 (DGAS…VSAS) and 248–270 (RILA…TQAV). The Peripheral subunit-binding (PSBD) domain maps to 221–258 (SASPFAKKLAAENGLDLSGVSGSGPGGRILASDLSQAP). Residues His-480 and Asp-484 contribute to the active site.

Belongs to the 2-oxoacid dehydrogenase family. The cofactor is (R)-lipoate.

The protein localises to the mitochondrion matrix. The catalysed reaction is N(6)-[(R)-dihydrolipoyl]-L-lysyl-[protein] + acetyl-CoA = N(6)-[(R)-S(8)-acetyldihydrolipoyl]-L-lysyl-[protein] + CoA. Functionally, the pyruvate dehydrogenase complex catalyzes the overall conversion of pyruvate to acetyl-CoA and CO(2). It contains multiple copies of three enzymatic components: pyruvate dehydrogenase (E1), dihydrolipoamide acetyltransferase (E2) and lipoamide dehydrogenase (E3). This is Dihydrolipoyllysine-residue acetyltransferase component of pyruvate dehydrogenase complex, mitochondrial from Caenorhabditis elegans.